A 1044-amino-acid polypeptide reads, in one-letter code: GRB10-interacting GYF protein 1 (1044 aa).

S24, S28, S137, and S157 each carry phosphoserine. Disordered stretches follow at residues 104–290 and 306–424; these read GKGA…DGLP and ASGA…LEDE. Basic and acidic residues-rich tracts occupy residues 148 to 179 and 186 to 203; these read NPRE…RSGF and PRKE…SLRE. S228 bears the Phosphoserine mark. 2 stretches are compositionally biased toward basic and acidic residues: residues 237-265 and 316-332; these read GWRE…EDGR and GPKE…FRGL. Positions 333–350 are enriched in acidic residues; the sequence is EEEEEEEEEPSEGVDEER. S343 carries the phosphoserine modification. A compositionally biased stretch (low complexity) spans 366–379; it reads NSSSPSSLPALGPL. Basic and acidic residues predominate over residues 389 to 403; sequence AVEKELPPAEGDELR. At S408 the chain carries Phosphoserine. A GYF domain is found at 476–524; sequence ARKWFYKDPQGEIQGPFTTQEMAEWFQAGYFSMSLLVKRGCDEGFQPLG. 2 positions are modified to phosphoserine: S540 and S634. Residues 692–706 show a composition bias toward basic and acidic residues; that stretch reads KREEEERKRREEKRR. Disordered stretches follow at residues 692 to 721, 820 to 842, 855 to 883, 966 to 987, 1000 to 1019, and 1024 to 1044; these read KREE…RQEE, EAGP…LGLW, SLGL…RKKT, QKAS…QEAW, NHST…RALM, and PSIL…VDDY. Over residues 829–839 the composition is skewed to gly residues; that stretch reads DKSGGSSGGNL. Composition is skewed to low complexity over residues 855-877 and 970-984; these read SLGL…LSGR and QQRQ…QQQQ. The residue at position 863 (S863) is a Phosphoserine.

Belongs to the GIGYF family. Interacts with GRB10. This transient binding is increased under IGF1 stimulation and leads to recruitment of GIGYF1/GRB10 complex to IGF1 receptor. Interacts with DDX6. Ubiquitous. Lower expression in skeletal muscle, liver and testis.

May act cooperatively with GRB10 to regulate tyrosine kinase receptor signaling. May increase IGF1 receptor phosphorylation under IGF1 stimulation as well as phosphorylation of IRS1 and SHC1. This Mus musculus (Mouse) protein is GRB10-interacting GYF protein 1 (Gigyf1).